Consider the following 153-residue polypeptide: MSVTIHTKPFGTIQVDSKQILKFPQGLLGFEEFDEYALIEESAESPFKWLQSTKESGLAFIVIQPELFMNQYKPAISDEELHDIGLTSWKDGIIFLIVTIPHDNPKGMTANLQGPIILNGKEGKGKQCISRDENHSIRKNIIESMEEMSSEKV.

The protein belongs to the FliW family. Interacts with translational regulator CsrA and flagellin(s).

Its subcellular location is the cytoplasm. Its function is as follows. Acts as an anti-CsrA protein, binds CsrA and prevents it from repressing translation of its target genes, one of which is flagellin. Binds to flagellin and participates in the assembly of the flagellum. This Leptospira biflexa serovar Patoc (strain Patoc 1 / Ames) protein is Flagellar assembly factor FliW.